The sequence spans 534 residues: CTP synthase (534 aa).

Residues 1 to 266 are amidoligase domain; that stretch reads MKQKFIFVTG…DELIVARLGL (266 aa). CTP is bound at residue Ser14. Ser14 serves as a coordination point for UTP. Residues 15–20 and Asp72 contribute to the ATP site; that span reads SIGKGL. 2 residues coordinate Mg(2+): Asp72 and Glu140. CTP is bound by residues 147 to 149, 187 to 192, and Lys223; these read DIE and KSKPTQ. Residues 187-192 and Lys223 contribute to the UTP site; that span reads KSKPTQ. In terms of domain architecture, Glutamine amidotransferase type-1 spans 291–534; the sequence is KIGVVGKYVD…HFVKASLKKK (244 aa). Gly353 provides a ligand contact to L-glutamine. The Nucleophile; for glutamine hydrolysis role is filled by Cys380. Residues 381–384, Glu404, and Arg464 each bind L-glutamine; that span reads FGMQ. Residues His509 and Glu511 contribute to the active site.

It belongs to the CTP synthase family. Homotetramer.

It carries out the reaction UTP + L-glutamine + ATP + H2O = CTP + L-glutamate + ADP + phosphate + 2 H(+). It catalyses the reaction L-glutamine + H2O = L-glutamate + NH4(+). The catalysed reaction is UTP + NH4(+) + ATP = CTP + ADP + phosphate + 2 H(+). It participates in pyrimidine metabolism; CTP biosynthesis via de novo pathway; CTP from UDP: step 2/2. Allosterically activated by GTP, when glutamine is the substrate; GTP has no effect on the reaction when ammonia is the substrate. The allosteric effector GTP functions by stabilizing the protein conformation that binds the tetrahedral intermediate(s) formed during glutamine hydrolysis. Inhibited by the product CTP, via allosteric rather than competitive inhibition. Catalyzes the ATP-dependent amination of UTP to CTP with either L-glutamine or ammonia as the source of nitrogen. Regulates intracellular CTP levels through interactions with the four ribonucleotide triphosphates. The polypeptide is CTP synthase (Bdellovibrio bacteriovorus (strain ATCC 15356 / DSM 50701 / NCIMB 9529 / HD100)).